A 506-amino-acid polypeptide reads, in one-letter code: DNA nucleotidylexotransferase (506 aa).

A Nuclear localization signal motif is present at residues 11-17 (SQRKRQK). The 98-residue stretch at 27–124 (GYEIKFNKLV…RPVDLEKKYH (98 aa)) folds into the BRCT domain. Residues 258–262 (VGVKT) form an involved in DNA binding region. A 2'-deoxyribonucleoside 5'-triphosphate contacts are provided by residues 333 to 338 (GFRRGK) and 342 to 345 (HDID). Residues Asp-343, Asp-345, and Asp-430 each coordinate Mg(2+). 445 to 446 (GW) contributes to the a 2'-deoxyribonucleoside 5'-triphosphate binding site.

This sequence belongs to the DNA polymerase type-X family. Mg(2+) serves as cofactor.

It localises to the nucleus. It carries out the reaction DNA(n) + a 2'-deoxyribonucleoside 5'-triphosphate = DNA(n+1) + diphosphate. Functionally, template-independent DNA polymerase which catalyzes the random addition of deoxynucleoside 5'-triphosphate to the 3'-end of a DNA initiator. One of the in vivo functions of this enzyme is the addition of nucleotides at the junction (N region) of rearranged Ig heavy chain and T-cell receptor gene segments during the maturation of B- and T-cells. This chain is DNA nucleotidylexotransferase (DNTT), found in Gallus gallus (Chicken).